Here is a 247-residue protein sequence, read N- to C-terminus: Pyrroloquinoline-quinone synthase (247 aa).

The protein belongs to the PqqC family.

The catalysed reaction is 6-(2-amino-2-carboxyethyl)-7,8-dioxo-1,2,3,4,7,8-hexahydroquinoline-2,4-dicarboxylate + 3 O2 = pyrroloquinoline quinone + 2 H2O2 + 2 H2O + H(+). It participates in cofactor biosynthesis; pyrroloquinoline quinone biosynthesis. Functionally, ring cyclization and eight-electron oxidation of 3a-(2-amino-2-carboxyethyl)-4,5-dioxo-4,5,6,7,8,9-hexahydroquinoline-7,9-dicarboxylic-acid to PQQ. The sequence is that of Pyrroloquinoline-quinone synthase from Rhizobium rhizogenes (strain K84 / ATCC BAA-868) (Agrobacterium radiobacter).